The primary structure comprises 153 residues: Natriuretic peptides A (153 aa).

The N-terminal stretch at 1–25 is a signal peptide; the sequence is MGSFSTITASFLLFLACQLLWQTGA. 2 propeptides span residues 26 to 123 and 93 to 103; these read NPVY…AAPR and DGGALGRGSWD. The interval 62 to 104 is disordered; that stretch reads VLSEQNEEAGAALSPLPEVPPWAGEVNPAQRDGGALGRGSWDS. Serine 129 is subject to Phosphoserine. Cysteines 130 and 146 form a disulfide. Residues 147-151 are important for degradation of atrial natriuretic peptide by IDE; sequence NSFRY.

It belongs to the natriuretic peptide family. Homodimer; disulfide-linked antiparallel dimer. The precursor molecule is proteolytically cleaved by CORIN at Arg-123 to produce the atrial natriuretic peptide. Undergoes further proteolytic cleavage by unknown proteases to give rise to long-acting natriuretic peptide, vessel dilator and kaliuretic peptide. Additional processing gives rise to the auriculin and atriopeptin peptides. In the kidneys, alternative processing by an unknown protease results in the peptide urodilatin. In terms of processing, cleavage by MME initiates degradation of the factor and thereby regulates its activity. Degradation by IDE results in reduced activation of NPR1 (in vitro). During IDE degradation, the resulting products can temporarily stimulate NPR2 to produce cGMP, before the fragments are completely degraded and inactivated by IDE (in vitro). Post-translationally, degraded by IDE. Phosphorylation on Ser-129 decreases vasorelaxant activity.

It localises to the secreted. The protein resides in the perikaryon. The protein localises to the cell projection. In terms of biological role, hormone that plays a key role in mediating cardio-renal homeostasis, and is involved in vascular remodeling and regulating energy metabolism. Acts by specifically binding and stimulating NPR1 to produce cGMP, which in turn activates effector proteins, such as PRKG1, that drive various biological responses. Regulates vasodilation, natriuresis, diuresis and aldosterone synthesis and is therefore essential for regulating blood pressure, controlling the extracellular fluid volume and maintaining the fluid-electrolyte balance. Also involved in inhibiting cardiac remodeling and cardiac hypertrophy by inducing cardiomyocyte apoptosis and attenuating the growth of cardiomyocytes and fibroblasts. Plays a role in female pregnancy by promoting trophoblast invasion and spiral artery remodeling in uterus, and thus prevents pregnancy-induced hypertension. In adipose tissue, acts in various cGMP- and PKG-dependent pathways to regulate lipid metabolism and energy homeostasis. This includes up-regulating lipid metabolism and mitochondrial oxygen utilization by activating the AMP-activated protein kinase (AMPK), and increasing energy expenditure by acting via MAPK11 to promote the UCP1-dependent thermogenesis of brown adipose tissue. Binds the clearance receptor NPR3 which removes the hormone from circulation. May have a role in cardio-renal homeostasis through regulation of natriuresis, diuresis, vasodilation, and inhibiting aldosterone synthesis. In vitro, promotes the production of cGMP and induces vasodilation. May promote natriuresis, at least in part, by enhancing prostaglandin E2 synthesis resulting in the inhibition of renal Na+-K+-ATPase. However reports on the involvement of this peptide in mammal blood volume and blood pressure homeostasis are conflicting; according to a report, in vivo it is not sufficient to activate cGMP and does not inhibit collecting duct transport nor effect diuresis and natriuresis. Appears to bind to specific receptors that are distinct from the receptors bound by atrial natriuretic peptide and vessel dilator. Possibly enhances protein excretion in urine by decreasing proximal tubular protein reabsorption. Functionally, may have a role in cardio-renal homeostasis through regulation of natriuresis, diuresis, and vasodilation. In vitro, promotes the production of cGMP and induces vasodilation. May promote natriuresis, at least in part, by enhancing prostaglandin E2 synthesis resulting in the inhibition of renal Na+-K+-ATPase. However reports on the involvement of this peptide in mammal blood volume and blood pressure homeostasis are conflicting; according to a report it is not sufficient to activate cGMP and does not inhibit collecting duct transport nor effect diuresis and natriuresis. Appears to bind to specific receptors that are distinct from the receptors bound by the atrial natriuretic and long-acting natriuretic peptides. Possibly functions in protein excretion in urine by maintaining the integrity of the proximal tubules and enhancing protein excretion by decreasing proximal tubular protein reabsorption. Its function is as follows. May have a role in cardio-renal homeostasis through regulation of diuresis and inhibiting aldosterone synthesis. In vitro, promotes the production of cGMP and induces vasodilation. May promote natriuresis, at least in part, by enhancing prostaglandin E2 synthesis resulting in the inhibition of renal Na+-K+-ATPase. May have a role in potassium excretion but not sodium excretion (natriuresis). Possibly enhances protein excretion in urine by decreasing proximal tubular protein reabsorption. In terms of biological role, hormone produced in the kidneys that appears to be important for maintaining cardio-renal homeostasis. Mediates vasodilation, natriuresis and diuresis primarily in the renal system, in order to maintain the extracellular fluid volume and control the fluid-electrolyte balance. Specifically binds and stimulates cGMP production by renal transmembrane receptors, likely NPR1. Urodilatin not ANP, may be the natriuretic peptide responsible for the regulation of sodium and water homeostasis in the kidney. May have a role in cardio-renal homeostasis through regulation of natriuresis and vasodilation. In vivo promotes natriuresis and in vitro, vasodilates renal artery strips. Functionally, may have a role in cardio-renal homeostasis through regulation of regulation of natriuresis and vasodilation. In vivo promotes natriuresis. In vitro, vasodilates intestinal smooth muscle but not smooth muscle strips. Its function is as follows. May have a role in cardio-renal homeostasis through regulation of natriuresis and vasodilation. In vivo promotes natriuresis. In vitro, selectively vasodilates intestinal and vascular smooth muscle strips. In terms of biological role, may have a role in cardio-renal homeostasis through regulation of natriuresis and vasodilation. In vivo promotes natriuresis. In vitro, selectively vasodilates intestinal smooth muscle but not vascular smooth muscle strips. This chain is Natriuretic peptides A (NPPA), found in Felis catus (Cat).